A 97-amino-acid polypeptide reads, in one-letter code: Large ribosomal subunit protein bL27 (97 aa).

The propeptide occupies 1–12 (MLKMNLANLQLF). The segment at 14–38 (HKKGGGSTSNGRDSESKRLGAKAAD) is disordered.

It belongs to the bacterial ribosomal protein bL27 family. Post-translationally, the N-terminus is cleaved by ribosomal processing cysteine protease Prp.

The sequence is that of Large ribosomal subunit protein bL27 from Streptococcus mutans serotype c (strain ATCC 700610 / UA159).